A 264-amino-acid chain; its full sequence is Thymidylate synthase (264 aa).

R21 provides a ligand contact to dUMP. H51 lines the (6R)-5,10-methylene-5,6,7,8-tetrahydrofolate pocket. Position 126–127 (126–127 (RR)) interacts with dUMP. C146 (nucleophile) is an active-site residue. DUMP contacts are provided by residues 166-169 (RSAD), N177, and 207-209 (HLY). D169 serves as a coordination point for (6R)-5,10-methylene-5,6,7,8-tetrahydrofolate. A263 is a binding site for (6R)-5,10-methylene-5,6,7,8-tetrahydrofolate.

Belongs to the thymidylate synthase family. Bacterial-type ThyA subfamily. In terms of assembly, homodimer.

Its subcellular location is the cytoplasm. The catalysed reaction is dUMP + (6R)-5,10-methylene-5,6,7,8-tetrahydrofolate = 7,8-dihydrofolate + dTMP. The protein operates within pyrimidine metabolism; dTTP biosynthesis. Functionally, catalyzes the reductive methylation of 2'-deoxyuridine-5'-monophosphate (dUMP) to 2'-deoxythymidine-5'-monophosphate (dTMP) while utilizing 5,10-methylenetetrahydrofolate (mTHF) as the methyl donor and reductant in the reaction, yielding dihydrofolate (DHF) as a by-product. This enzymatic reaction provides an intracellular de novo source of dTMP, an essential precursor for DNA biosynthesis. The chain is Thymidylate synthase from Rhizobium etli (strain ATCC 51251 / DSM 11541 / JCM 21823 / NBRC 15573 / CFN 42).